The sequence spans 183 residues: Large ribosomal subunit protein uL6 (183 aa).

It belongs to the universal ribosomal protein uL6 family. As to quaternary structure, part of the 50S ribosomal subunit.

Functionally, this protein binds to the 23S rRNA, and is important in its secondary structure. It is located near the subunit interface in the base of the L7/L12 stalk, and near the tRNA binding site of the peptidyltransferase center. The polypeptide is Large ribosomal subunit protein uL6 (Ruminiclostridium cellulolyticum (strain ATCC 35319 / DSM 5812 / JCM 6584 / H10) (Clostridium cellulolyticum)).